The primary structure comprises 305 residues: Large ribosomal subunit protein uL10 (305 aa).

Belongs to the universal ribosomal protein uL10 family. In terms of assembly, P0 forms a pentameric complex by interaction with dimers of P1 and P2. Post-translationally, phosphorylated.

Ribosomal protein P0 is the functional equivalent of E.coli protein L10. This chain is Large ribosomal subunit protein uL10 (rplp0), found in Dictyostelium discoideum (Social amoeba).